The following is a 387-amino-acid chain: Methylthioribose-1-phosphate isomerase (387 aa).

Aspartate 257 functions as the Proton donor in the catalytic mechanism.

This sequence belongs to the eIF-2B alpha/beta/delta subunits family. MtnA subfamily.

The protein localises to the cytoplasm. It is found in the nucleus. It carries out the reaction 5-(methylsulfanyl)-alpha-D-ribose 1-phosphate = 5-(methylsulfanyl)-D-ribulose 1-phosphate. Its pathway is amino-acid biosynthesis; L-methionine biosynthesis via salvage pathway; L-methionine from S-methyl-5-thio-alpha-D-ribose 1-phosphate: step 1/6. Functionally, catalyzes the interconversion of methylthioribose-1-phosphate (MTR-1-P) into methylthioribulose-1-phosphate (MTRu-1-P). This Neosartorya fischeri (strain ATCC 1020 / DSM 3700 / CBS 544.65 / FGSC A1164 / JCM 1740 / NRRL 181 / WB 181) (Aspergillus fischerianus) protein is Methylthioribose-1-phosphate isomerase (mri1).